The chain runs to 629 residues: MATYNADAIEVLSGLDPVRKRPGMYTDTTRPNHLAQEVIDNSVDEALAGHAKSVQVILHQDNSLEVIDDGRGMPVDIHPEEGVPGVELILTKLHAGGKFSNKNYQFSGGLHGVGISVVNALSTRVEVRVKRDANEYRMTFADGFKDSDLEVIGTVGKRNTGTSVHFWPDPKYFDSAKFSVSRLKHVLKAKAVLCPGLSVVFEDKNTGERVEWHFEDGLRSYLTDAVAELPRLPDEPFCGNLEGSKEAVSWALLWLPEGGESVQESYVNLIPTAQGGTHVNGLRQGLLDAMREFCEFRNLLPRGVKLAPEDVWERIAFVLSMKMQEPQFSGQTKERLSSREAAAFVSGVVKDAFSLWLNEHAEIGLQLAELAISNAGRRLKAGKKVERKKITQGPALPGKLADCAGQEPMRAELFLVEGDSAGGSAKQARDKEFQAIMPLRGKILNTWEVDGGEVLASQEVHDIAVAIGVDPGASDLAQLRYGKICILADADSDGLHIATLLCALFVRHFRPLVEAGHVYVAMPPLYRIDLGKDIYYALDEAERDGILERLAAEKKRGKPQVTRFKGLGEMNPLQLRETTMDPNTRRLVQLTLEDATGTLEIMDMLLAKKRAGDRKSWLESKGNLAEVLV.

Residues Y4, N41, D68, 109 to 115 (GLHGVGI), and K333 each bind ATP. The Toprim domain occupies 411–524 (AELFLVEGDS…AGHVYVAMPP (114 aa)). Residues E417, D489, and D491 each contribute to the Mg(2+) site.

It belongs to the type II topoisomerase family. ParE type 1 subfamily. Heterotetramer composed of ParC and ParE. Mg(2+) serves as cofactor. The cofactor is Mn(2+). Requires Ca(2+) as cofactor.

It catalyses the reaction ATP-dependent breakage, passage and rejoining of double-stranded DNA.. Functionally, topoisomerase IV is essential for chromosome segregation. It relaxes supercoiled DNA. Performs the decatenation events required during the replication of a circular DNA molecule. This chain is DNA topoisomerase 4 subunit B, found in Pseudomonas aeruginosa (strain ATCC 15692 / DSM 22644 / CIP 104116 / JCM 14847 / LMG 12228 / 1C / PRS 101 / PAO1).